We begin with the raw amino-acid sequence, 219 residues long: Large ribosomal subunit protein uL16y (219 aa).

The protein belongs to the universal ribosomal protein uL16 family. In terms of assembly, component of the small ribosomal subunit. Mature ribosomes consist of a small (40S) and a large (60S) subunit. The 40S subunit contains about 33 different proteins and 1 molecule of RNA (18S). The 60S subunit contains about 49 different proteins and 3 molecules of RNA (25S, 5.8S and 5S).

In Oryza sativa subsp. japonica (Rice), this protein is Large ribosomal subunit protein uL16y (SG12).